A 145-amino-acid polypeptide reads, in one-letter code: Large ribosomal subunit protein bL35c (145 aa).

A chloroplast-targeting transit peptide spans M1–V56.

This sequence belongs to the bacterial ribosomal protein bL35 family. In terms of assembly, part of the 50S ribosomal subunit.

The protein resides in the plastid. It localises to the chloroplast. The sequence is that of Large ribosomal subunit protein bL35c from Arabidopsis thaliana (Mouse-ear cress).